Reading from the N-terminus, the 339-residue chain is Phosphate acyltransferase (339 aa).

It belongs to the PlsX family. Homodimer. Probably interacts with PlsY.

It is found in the cytoplasm. It catalyses the reaction a fatty acyl-[ACP] + phosphate = an acyl phosphate + holo-[ACP]. It participates in lipid metabolism; phospholipid metabolism. In terms of biological role, catalyzes the reversible formation of acyl-phosphate (acyl-PO(4)) from acyl-[acyl-carrier-protein] (acyl-ACP). This enzyme utilizes acyl-ACP as fatty acyl donor, but not acyl-CoA. This is Phosphate acyltransferase from Vesicomyosocius okutanii subsp. Calyptogena okutanii (strain HA).